Here is a 157-residue protein sequence, read N- to C-terminus: Cyclic pyranopterin monophosphate synthase (157 aa).

Residues 75–77 (LCH) and 111–112 (ME) contribute to the substrate site. Aspartate 126 is an active-site residue.

Belongs to the MoaC family. As to quaternary structure, homohexamer; trimer of dimers.

The enzyme catalyses (8S)-3',8-cyclo-7,8-dihydroguanosine 5'-triphosphate = cyclic pyranopterin phosphate + diphosphate. It participates in cofactor biosynthesis; molybdopterin biosynthesis. Functionally, catalyzes the conversion of (8S)-3',8-cyclo-7,8-dihydroguanosine 5'-triphosphate to cyclic pyranopterin monophosphate (cPMP). This chain is Cyclic pyranopterin monophosphate synthase, found in Novosphingobium aromaticivorans (strain ATCC 700278 / DSM 12444 / CCUG 56034 / CIP 105152 / NBRC 16084 / F199).